The following is a 126-amino-acid chain: Aspartate 1-decarboxylase (126 aa).

Ser-25 serves as the catalytic Schiff-base intermediate with substrate; via pyruvic acid. Ser-25 carries the pyruvic acid (Ser) modification. Position 57 (Thr-57) interacts with substrate. Catalysis depends on Tyr-58, which acts as the Proton donor. 73–75 (GAA) is a binding site for substrate.

The protein belongs to the PanD family. In terms of assembly, heterooctamer of four alpha and four beta subunits. Pyruvate is required as a cofactor. Post-translationally, is synthesized initially as an inactive proenzyme, which is activated by self-cleavage at a specific serine bond to produce a beta-subunit with a hydroxyl group at its C-terminus and an alpha-subunit with a pyruvoyl group at its N-terminus.

The protein localises to the cytoplasm. The catalysed reaction is L-aspartate + H(+) = beta-alanine + CO2. Its pathway is cofactor biosynthesis; (R)-pantothenate biosynthesis; beta-alanine from L-aspartate: step 1/1. Catalyzes the pyruvoyl-dependent decarboxylation of aspartate to produce beta-alanine. This chain is Aspartate 1-decarboxylase, found in Salmonella dublin (strain CT_02021853).